The following is a 152-amino-acid chain: Large ribosomal subunit protein uL13 (152 aa).

A disordered region spans residues 129 to 152 (EHPHEAQSPEVLDVKSMNKKNTRS).

The protein belongs to the universal ribosomal protein uL13 family. As to quaternary structure, part of the 50S ribosomal subunit.

This protein is one of the early assembly proteins of the 50S ribosomal subunit, although it is not seen to bind rRNA by itself. It is important during the early stages of 50S assembly. The sequence is that of Large ribosomal subunit protein uL13 from Ruegeria sp. (strain TM1040) (Silicibacter sp.).